The chain runs to 550 residues: Cyclopentanone 1,2-monooxygenase (550 aa).

FAD-binding positions include 31–32 (FT), D51, W60, D71, Y77, and V123.

The protein belongs to the FAD-binding monooxygenase family. Homotetramer. FAD is required as a cofactor.

It carries out the reaction cyclopentanone + NADPH + O2 + H(+) = 5-valerolactone + NADP(+) + H2O. The protein operates within alcohol metabolism; cyclopentanol degradation; 5-valerolactone from cyclopentanol: step 2/2. In terms of biological role, catalyzes a Baeyer-Villiger oxidation reaction, i.e. the insertion of an oxygen atom into a carbon-carbon bond adjacent to a carbonyl, which converts ketones to esters or lactones using NADPH as an electron donor. Converts cyclopentanone to 5-valerolactone, a step in the degradation pathway of cyclopentanol. Besides cycloalkanones, can also act on methylated and other alkylated cycloalkanones, and on methylated cycloalkenones, with high enantioselectivity in some cases. Cannot use NADH instead of NADPH. This Comamonas sp. (strain NCIMB 9872) protein is Cyclopentanone 1,2-monooxygenase (cpnB).